A 154-amino-acid polypeptide reads, in one-letter code: Basic phospholipase A2 PC20 (154 aa).

A signal peptide spans 1–21 (MYPAHLLVLLAVCVSLLGASA). The propeptide occupies 22 to 27 (ISPRPL). 7 disulfide bridges follow: Cys-38/Cys-98, Cys-54/Cys-143, Cys-56/Cys-72, Cys-71/Cys-125, Cys-78/Cys-118, Cys-87/Cys-111, and Cys-105/Cys-116. Ca(2+)-binding residues include Tyr-55, Ser-57, and Gly-59. His-75 is an active-site residue. Asp-76 contributes to the Ca(2+) binding site. The active site involves Asp-119.

Belongs to the phospholipase A2 family. Group I subfamily. D49 sub-subfamily. Ca(2+) is required as a cofactor. In terms of tissue distribution, expressed by the venom gland.

The protein localises to the secreted. The enzyme catalyses a 1,2-diacyl-sn-glycero-3-phosphocholine + H2O = a 1-acyl-sn-glycero-3-phosphocholine + a fatty acid + H(+). Its function is as follows. Snake venom phospholipase A2 (PLA2) that inhibits neuromuscular transmission by blocking acetylcholine release from the nerve termini. PLA2 catalyzes the calcium-dependent hydrolysis of the 2-acyl groups in 3-sn-phosphoglycerides. This chain is Basic phospholipase A2 PC20, found in Laticauda colubrina (Yellow-lipped sea krait).